We begin with the raw amino-acid sequence, 60 residues long: Large ribosomal subunit protein bL32 (60 aa).

The segment at 1 to 60 (MAVQQNKKSRSARDMRRSHDALEASTLSVEKSTGEVHLRHHVSPEGVYRGRKVIDKGADE) is disordered. Basic and acidic residues predominate over residues 11 to 22 (SARDMRRSHDAL).

It belongs to the bacterial ribosomal protein bL32 family.

This chain is Large ribosomal subunit protein bL32, found in Ectopseudomonas mendocina (strain ymp) (Pseudomonas mendocina).